A 638-amino-acid chain; its full sequence is Stress-activated protein kinase alpha (638 aa).

ANK repeat units follow at residues 43–72 (YGQS…TLKA), 80–109 (NGFS…NVDV), 113–146 (DLNT…NVNA), 150–181 (NGET…NVNL), 185–214 (FQES…DVDC), and 219–248 (ERKT…LFDW). The SAM domain maps to 240–303 (KKYKDLFDWL…LKETSNLANE (64 aa)). In terms of domain architecture, Protein kinase spans 351-620 (LEYTEKLGAG…RLVTIENEYR (270 aa)). Residues 357–365 (LGAGSSGKV) and K378 each bind ATP. The Proton acceptor role is filled by D472.

The protein belongs to the protein kinase superfamily. TKL Ser/Thr protein kinase family. In terms of assembly, interacts with F-actin. Post-translationally, autophosphorylated.

Its subcellular location is the cytoplasm. The protein resides in the cytoskeleton. The enzyme catalyses L-seryl-[protein] + ATP = O-phospho-L-seryl-[protein] + ADP + H(+). It carries out the reaction L-threonyl-[protein] + ATP = O-phospho-L-threonyl-[protein] + ADP + H(+). May be involved in cortical F-actin organization and resistance to osmotic stress. Activated upon cell detachment, in vitro. This chain is Stress-activated protein kinase alpha (spkA-1), found in Dictyostelium discoideum (Social amoeba).